The sequence spans 267 residues: Auxin-responsive protein IAA18 (267 aa).

The EAR-like (transcriptional repression) motif lies at 42 to 46 (LELKL). Residues 81–101 (PSSTKTTSHKRTAPGPVVGWP) form a disordered region. Residues 149–248 (GMFVKINMYG…SVKRLRVIKT (100 aa)) form the PB1 domain.

Belongs to the Aux/IAA family. As to quaternary structure, homodimers and heterodimers. Interacts with TPL.

It is found in the nucleus. Aux/IAA proteins are short-lived transcriptional factors that function as repressors of early auxin response genes at low auxin concentrations. Repression is thought to result from the interaction with auxin response factors (ARFs), proteins that bind to the auxin-responsive promoter element (AuxRE). Formation of heterodimers with ARF proteins may alter their ability to modulate early auxin response genes expression. The chain is Auxin-responsive protein IAA18 (IAA18) from Arabidopsis thaliana (Mouse-ear cress).